Reading from the N-terminus, the 1450-residue chain is ABC transporter G family member 37 (1450 aa).

The ABC transporter 1 domain occupies 158–431 (GNALHILPNK…FEFMGFRCPA (274 aa)). 191-198 (GPPGSGKT) is an ATP binding site. The 213-residue stretch at 509 to 721 (ELLKATIDRE…AQNAISTNEF (213 aa)) folds into the ABC transmembrane type-2 1 domain. Helical transmembrane passes span 527 to 547 (FMYI…MTTF), 559 to 579 (GMIY…NGFA), 614 to 634 (IPIT…VIGF), 646 to 666 (LLLL…AGIG), 670 to 690 (VVSH…GGFI), and 756 to 776 (IGLG…TVAL). Residues 852–1104 (ISFNDVRYSV…KLIEYFEGID (253 aa)) form the ABC transporter 2 domain. 897-904 (GVSGAGKT) serves as a coordination point for ATP. Residues 1177 to 1391 (TQCLACLWKQ…TLYGLVASQF (215 aa)) enclose the ABC transmembrane type-2 2 domain. The next 7 helical transmembrane spans lie at 1198 to 1218 (AVRL…FWNL), 1236 to 1256 (YAAV…VVVV), 1284 to 1304 (LPYI…MIGF), 1311 to 1331 (FLWY…YGMM), 1341 to 1361 (IAAI…GYLI), 1372 to 1392 (WYCW…SQFG), and 1422 to 1442 (VVAV…SFAI).

The protein belongs to the ABC transporter superfamily. ABCG family. PDR (TC 3.A.1.205) subfamily.

It is found in the membrane. Functionally, may be a general defense protein. The chain is ABC transporter G family member 37 from Oryza sativa subsp. japonica (Rice).